The sequence spans 364 residues: Pectinesterase (364 aa).

The signal sequence occupies residues 1–22 (MSCIAVEAVLLGILLYIPIVLS). N103 is a glycosylation site (N-linked (GlcNAc...) asparagine). Residue D220 is part of the active site.

It localises to the secreted. It catalyses the reaction [(1-&gt;4)-alpha-D-galacturonosyl methyl ester](n) + n H2O = [(1-&gt;4)-alpha-D-galacturonosyl](n) + n methanol + n H(+). It participates in glycan metabolism; pectin degradation; 2-dehydro-3-deoxy-D-gluconate from pectin: step 1/5. In terms of biological role, catalyzes the demethylesterification of homogalacturonan components of pectin. This Parthenium hysterophorus (Santa Maria feverfew) protein is Pectinesterase.